We begin with the raw amino-acid sequence, 668 residues long: Probable 6-phosphofructo-2-kinase PB17E12.14c (668 aa).

The segment covering 1-14 has biased composition (basic and acidic residues); it reads MSNNNNKDDSELQS. 2 disordered regions span residues 1-105 and 136-185; these read MSNN…GSRP and HRVP…EATN. Composition is skewed to polar residues over residues 46–56, 65–86, and 164–184; these read NDHSFTNTDSV, SPVSTLTSNSANFSDSSLQNSP, and SSMSIPGQTSIVSSNNGSEAT. An ATP-binding site is contributed by 197 to 204; it reads GLPARGKS. Active-site residues include D281 and C312. Position 346 (R346) interacts with beta-D-fructose 6-phosphate. E540 is a catalytic residue. The active-site Proton donor is the H608.

It carries out the reaction beta-D-fructose 6-phosphate + ATP = beta-D-fructose 2,6-bisphosphate + ADP + H(+). Its function is as follows. Synthesis of fructose 2,6-bisphosphate. This Schizosaccharomyces pombe (strain 972 / ATCC 24843) (Fission yeast) protein is Probable 6-phosphofructo-2-kinase PB17E12.14c.